Here is a 214-residue protein sequence, read N- to C-terminus: Orotidine 5'-phosphate decarboxylase (214 aa).

Residues aspartate 11, lysine 33, 59–68 (DFKIADIPNT), serine 114, 164–174 (PGIGSQGGRAS), glycine 187, and arginine 188 each bind substrate. Lysine 61 (proton donor) is an active-site residue.

It belongs to the OMP decarboxylase family. Type 1 subfamily. As to quaternary structure, homodimer.

It carries out the reaction orotidine 5'-phosphate + H(+) = UMP + CO2. It participates in pyrimidine metabolism; UMP biosynthesis via de novo pathway; UMP from orotate: step 2/2. Catalyzes the decarboxylation of orotidine 5'-monophosphate (OMP) to uridine 5'-monophosphate (UMP). In Thermoplasma acidophilum (strain ATCC 25905 / DSM 1728 / JCM 9062 / NBRC 15155 / AMRC-C165), this protein is Orotidine 5'-phosphate decarboxylase.